Consider the following 219-residue polypeptide: 7-carboxy-7-deazaguanine synthase (219 aa).

Residues 12-14 and R27 contribute to the substrate site; that span reads IQG. The region spanning 18–219 is the Radical SAM core domain; sequence YTGTPSIFIR…VQIHKYLKIR (202 aa). [4Fe-4S] cluster-binding residues include C31, C35, and C38. T40 contributes to the Mg(2+) binding site. Substrate is bound at residue T92. S-adenosyl-L-methionine-binding positions include G94 and 136 to 138; that span reads SPK.

Belongs to the radical SAM superfamily. 7-carboxy-7-deazaguanine synthase family. In terms of assembly, homodimer. The cofactor is [4Fe-4S] cluster. S-adenosyl-L-methionine serves as cofactor. It depends on Mg(2+) as a cofactor.

The enzyme catalyses 6-carboxy-5,6,7,8-tetrahydropterin + H(+) = 7-carboxy-7-deazaguanine + NH4(+). The protein operates within purine metabolism; 7-cyano-7-deazaguanine biosynthesis. In terms of biological role, catalyzes the complex heterocyclic radical-mediated conversion of 6-carboxy-5,6,7,8-tetrahydropterin (CPH4) to 7-carboxy-7-deazaguanine (CDG), a step common to the biosynthetic pathways of all 7-deazapurine-containing compounds. This chain is 7-carboxy-7-deazaguanine synthase, found in Buchnera aphidicola subsp. Schizaphis graminum (strain Sg).